A 320-amino-acid polypeptide reads, in one-letter code: MARNKIALIGSGMIGGTLAHVAAREELGDVILFDIAEGLPQGKGLDIAESTPVYGASVNLKGVNDYAGIAGADVCIVTAGVPRKPGMSRDDLLGINLKVMKAVGEGIKAHAPNAFVICITNPLDAMVWALQKFSGLPTEKVVGMAGVLDSSRFAYFLSEKTGVSVADIHAWTLGGHGDDMVPMVRHSTVGGLPLTQLVAQGWMSQAELDAIVERTRKGGGEIVNLLKTGSAYYAPAESAIAMAKSYLADQKRVLPVASYCSGQYGLKDMYVGVPTLIGAGGAEKIVEFDFNADEKAMFDKSVASVNGLIEACKGIDPSLA.

NAD(+) is bound by residues 10-15 (GSGMIG) and Asp-34. The substrate site is built by Arg-83 and Arg-89. NAD(+) is bound by residues Asn-96 and 119–121 (ITN). Residues Asn-121 and Arg-152 each coordinate substrate. The active-site Proton acceptor is His-176.

This sequence belongs to the LDH/MDH superfamily. MDH type 3 family.

It catalyses the reaction (S)-malate + NAD(+) = oxaloacetate + NADH + H(+). In terms of biological role, catalyzes the reversible oxidation of malate to oxaloacetate. The polypeptide is Malate dehydrogenase (Hyphomonas neptunium (strain ATCC 15444)).